Reading from the N-terminus, the 355-residue chain is MSGQPKRLMVMAGGTGGHVFPGLAVAHHLMAQGWQVRWLGTADRMEADLVPKHGIEIDFIRISGLRGKGVKALLLAPVRIFNAWRQARAIMKRFKPDVVLGMGGYVSGPGGLAAWSLGIPVVLHEQNGIAGLTNKWLAKIASRVMQAFPGAFPKAEVVGNPVRTDVLALPLPQARLAGREGPVRVLVVGGSQGARILNQTMPQVAARLGDAVTIWHQSGKGAQAEVQQAYAAASQPQHKVTEFIDDMAAAYAWADVVVCRSGALTVSEIAAAGLPALFVPFQHKDRQQYWNALPLEKAGAAKILEQPQFTVDAVSETLKGWDRATLLEMAERARAAAIPDATERVADEVRAVARA.

UDP-N-acetyl-alpha-D-glucosamine is bound by residues 15–17, Asn127, Arg163, Ser191, Ile244, 263–268, and Gln288; these read TGG and ALTVSE.

The protein belongs to the glycosyltransferase 28 family. MurG subfamily.

The protein resides in the cell inner membrane. It catalyses the reaction di-trans,octa-cis-undecaprenyl diphospho-N-acetyl-alpha-D-muramoyl-L-alanyl-D-glutamyl-meso-2,6-diaminopimeloyl-D-alanyl-D-alanine + UDP-N-acetyl-alpha-D-glucosamine = di-trans,octa-cis-undecaprenyl diphospho-[N-acetyl-alpha-D-glucosaminyl-(1-&gt;4)]-N-acetyl-alpha-D-muramoyl-L-alanyl-D-glutamyl-meso-2,6-diaminopimeloyl-D-alanyl-D-alanine + UDP + H(+). It participates in cell wall biogenesis; peptidoglycan biosynthesis. In terms of biological role, cell wall formation. Catalyzes the transfer of a GlcNAc subunit on undecaprenyl-pyrophosphoryl-MurNAc-pentapeptide (lipid intermediate I) to form undecaprenyl-pyrophosphoryl-MurNAc-(pentapeptide)GlcNAc (lipid intermediate II). The polypeptide is UDP-N-acetylglucosamine--N-acetylmuramyl-(pentapeptide) pyrophosphoryl-undecaprenol N-acetylglucosamine transferase (Cronobacter sakazakii (strain ATCC BAA-894) (Enterobacter sakazakii)).